We begin with the raw amino-acid sequence, 376 residues long: Alanine racemase (376 aa).

The Proton acceptor; specific for D-alanine role is filled by K36. K36 carries the post-translational modification N6-(pyridoxal phosphate)lysine. A substrate-binding site is contributed by R134. Y266 functions as the Proton acceptor; specific for L-alanine in the catalytic mechanism. M314 provides a ligand contact to substrate.

The protein belongs to the alanine racemase family. Requires pyridoxal 5'-phosphate as cofactor.

It carries out the reaction L-alanine = D-alanine. It functions in the pathway amino-acid biosynthesis; D-alanine biosynthesis; D-alanine from L-alanine: step 1/1. Functionally, catalyzes the interconversion of L-alanine and D-alanine. May also act on other amino acids. This Nitratidesulfovibrio vulgaris (strain ATCC 29579 / DSM 644 / CCUG 34227 / NCIMB 8303 / VKM B-1760 / Hildenborough) (Desulfovibrio vulgaris) protein is Alanine racemase (alr).